Reading from the N-terminus, the 58-residue chain is Large ribosomal subunit protein eL24 (58 aa).

Zn(2+) contacts are provided by Cys-6, Cys-9, Cys-32, and Cys-36. A C4-type zinc finger spans residues 6–36 (CAFCGADILPGYGIMYVKTDGTTLRFCSRKC).

The protein belongs to the eukaryotic ribosomal protein eL24 family. As to quaternary structure, part of the 50S ribosomal subunit. Forms a cluster with proteins L3 and L14. The cofactor is Zn(2+).

Binds to the 23S rRNA. The polypeptide is Large ribosomal subunit protein eL24 (Pyrobaculum islandicum (strain DSM 4184 / JCM 9189 / GEO3)).